Reading from the N-terminus, the 651-residue chain is Protein cueball (651 aa).

Positions 1-21 are cleaved as a signal peptide; the sequence is MILRLFILLSIITVYLQLSVG. The Extracellular segment spans residues 22–540; that stretch reads IQQQFEFAIT…VCLAPNAWTG (519 aa). N-linked (GlcNAc...) asparagine glycosylation is found at N77, N102, and N114. LDL-receptor class B repeat units follow at residues 115–162, 163–207, and 208–253; these read RTIY…DICG, RKLY…DQGA, and KRIF…TRNA. Residue N183 is glycosylated (N-linked (GlcNAc...) asparagine). The disordered stretch occupies residues 290-311; that stretch reads VEGEEGTGAMDDNDIWPVGDFE. An N-linked (GlcNAc...) asparagine glycan is attached at N324. 3 consecutive EGF-like domains span residues 374-408, 409-440, and 443-480; these read QLDELQREHCLGGGTYYPQQKFCVCVPGYKGTRCE, TNECHNFCVHGTCQISEMGYPKCYCQPGYSGE, and EVKKCLNFCQNGGDCQLDELTGEASCQCPSNFGGLRCE. 7 disulfides stabilise this stretch: C383–C396, C398–C407, C412–C421, C416–C431, C447–C457, C451–C468, and C470–C479. 2 N-linked (GlcNAc...) asparagine glycosylation sites follow: N482 and N499. The helical transmembrane segment at 541 to 561 threads the bilayer; sequence SVLMPLMISLILILLLLTIFI. Over 562 to 651 the chain is Cytoplasmic; it reads HGLRRLYKPK…LIHNMEDDLY (90 aa).

The protein belongs to the cueball family.

It localises to the cell membrane. In terms of biological role, has a role in spermatogenesis and oogenesis. In Drosophila willistoni (Fruit fly), this protein is Protein cueball.